A 113-amino-acid polypeptide reads, in one-letter code: C-X-C motif chemokine 6 (113 aa).

The first 36 residues, 1 to 36 (MSLLPSRAARVPGPSSSLCALLALLLLTPPGPLVSA), serve as a signal peptide directing secretion. Cystine bridges form between Cys-48/Cys-74 and Cys-50/Cys-90.

The protein belongs to the intercrine alpha (chemokine CxC) family.

It is found in the secreted. Its function is as follows. Chemotactic for neutrophil granulocytes. Signals through binding and activation of its receptors (CXCR1 and CXCR2). In addition to its chemotactic and angiogenic properties, it has strong antibacterial activity against Gram-positive and Gram-negative bacteria (90-fold-higher when compared to CXCL5 and CXCL7). The polypeptide is C-X-C motif chemokine 6 (CXCL6) (Equus caballus (Horse)).